Here is a 94-residue protein sequence, read N- to C-terminus: Small ribosomal subunit protein uS19 (94 aa).

The segment at 73–94 (EFAPTRTYRGHGKDAERTTRRR) is disordered. Residues 83–94 (HGKDAERTTRRR) show a composition bias toward basic and acidic residues.

Belongs to the universal ribosomal protein uS19 family.

Functionally, protein S19 forms a complex with S13 that binds strongly to the 16S ribosomal RNA. The sequence is that of Small ribosomal subunit protein uS19 from Thermomicrobium roseum (strain ATCC 27502 / DSM 5159 / P-2).